Here is a 284-residue protein sequence, read N- to C-terminus: Diaminopimelate epimerase (284 aa).

Substrate is bound by residues asparagine 20, glutamine 53, and asparagine 73. The active-site Proton donor is cysteine 82. Substrate contacts are provided by residues 83–84 (GN), asparagine 167, asparagine 200, and 218–219 (ER). Cysteine 227 functions as the Proton acceptor in the catalytic mechanism. 228–229 (GS) contributes to the substrate binding site.

This sequence belongs to the diaminopimelate epimerase family. As to quaternary structure, homodimer.

It is found in the cytoplasm. It carries out the reaction (2S,6S)-2,6-diaminopimelate = meso-2,6-diaminopimelate. Its pathway is amino-acid biosynthesis; L-lysine biosynthesis via DAP pathway; DL-2,6-diaminopimelate from LL-2,6-diaminopimelate: step 1/1. In terms of biological role, catalyzes the stereoinversion of LL-2,6-diaminopimelate (L,L-DAP) to meso-diaminopimelate (meso-DAP), a precursor of L-lysine and an essential component of the bacterial peptidoglycan. The protein is Diaminopimelate epimerase of Xanthomonas oryzae pv. oryzae (strain MAFF 311018).